The sequence spans 357 residues: Putative RING-H2 finger protein ATL37 (357 aa).

The first 31 residues, 1-31, serve as a signal peptide directing secretion; that stretch reads MTIFTRDFSHRILACVLLPLFLFQCLPYVTC. Residues 47–67 form a helical membrane-spanning segment; the sequence is SSIIGIVLLSLFLLLLVVYCL. The segment at 120 to 162 adopts an RING-type; atypical zinc-finger fold; sequence CAICLCEFEDEEPLRWMPPCSHTFHANCIDEWLSSRSTCPVCR. The segment at 172–210 is disordered; that stretch reads SFPHPSMDVETGNAQRGVQESPDERSLTGSSVTCNNNAN. The span at 198 to 210 shows a compositional bias: polar residues; sequence LTGSSVTCNNNAN. At Ser273 the chain carries Phosphoserine. Disordered stretches follow at residues 281–304 and 327–357; these read RSSR…QGRQ and LDRD…PEKN. Positions 283 to 304 are enriched in polar residues; sequence SRQGYRSGSVGNERTGFSQGRQ. The segment covering 340–357 has biased composition (basic and acidic residues); it reads NDKDFGERSFQRLMPEKN.

It belongs to the RING-type zinc finger family. ATL subfamily.

Its subcellular location is the membrane. It catalyses the reaction S-ubiquitinyl-[E2 ubiquitin-conjugating enzyme]-L-cysteine + [acceptor protein]-L-lysine = [E2 ubiquitin-conjugating enzyme]-L-cysteine + N(6)-ubiquitinyl-[acceptor protein]-L-lysine.. It participates in protein modification; protein ubiquitination. In Arabidopsis thaliana (Mouse-ear cress), this protein is Putative RING-H2 finger protein ATL37 (ATL37).